The following is a 185-amino-acid chain: Large ribosomal subunit protein uL22 (185 aa).

The protein belongs to the universal ribosomal protein uL22 family. In terms of assembly, part of the 50S ribosomal subunit.

Its function is as follows. This protein binds specifically to 23S rRNA. It makes multiple contacts with different domains of the 23S rRNA in the assembled 50S subunit and ribosome. Functionally, the globular domain of the protein is located near the polypeptide exit tunnel on the outside of the subunit, while an extended beta-hairpin is found that lines the wall of the exit tunnel in the center of the 70S ribosome. This Caldivirga maquilingensis (strain ATCC 700844 / DSM 13496 / JCM 10307 / IC-167) protein is Large ribosomal subunit protein uL22.